Reading from the N-terminus, the 442-residue chain is Tyrosine-protein kinase transforming protein RYK (442 aa).

A Protein kinase domain is found at 45–316; that stretch reads LSLGKVLGEG…QLKVHLEKLL (272 aa). ATP is bound by residues 51–59 and K77; that span reads LGEGEFGSV. D181 (proton acceptor) is an active-site residue. A Phosphotyrosine; by autocatalysis modification is found at Y212.

It belongs to the protein kinase superfamily. Tyr protein kinase family. AXL/UFO subfamily.

The protein localises to the host cell membrane. The enzyme catalyses L-tyrosyl-[protein] + ATP = O-phospho-L-tyrosyl-[protein] + ADP + H(+). The protein is Tyrosine-protein kinase transforming protein RYK (V-RYK) of Avian retrovirus RPL30.